Reading from the N-terminus, the 348-residue chain is Heat-inducible transcription repressor HrcA (348 aa).

The protein belongs to the HrcA family.

Functionally, negative regulator of class I heat shock genes (grpE-dnaK-dnaJ and groELS operons). Prevents heat-shock induction of these operons. The polypeptide is Heat-inducible transcription repressor HrcA (Syntrophobacter fumaroxidans (strain DSM 10017 / MPOB)).